Here is a 419-residue protein sequence, read N- to C-terminus: Adenylosuccinate synthetase (419 aa).

GTP is bound by residues 15-21 (GDEGKGK) and 43-45 (GHT). Catalysis depends on Asp-16, which acts as the Proton acceptor. Asp-16 and Gly-43 together coordinate Mg(2+). IMP contacts are provided by residues 16–19 (DEGK), 41–44 (NAGH), Thr-128, Arg-142, Gln-223, Thr-238, and Arg-302. His-44 (proton donor) is an active-site residue. A substrate-binding site is contributed by 298–304 (TTTGRAR). GTP-binding positions include Arg-304, 330 to 332 (KLD), and 408 to 410 (STS).

It belongs to the adenylosuccinate synthetase family. Homodimer. It depends on Mg(2+) as a cofactor.

The protein resides in the cytoplasm. The enzyme catalyses IMP + L-aspartate + GTP = N(6)-(1,2-dicarboxyethyl)-AMP + GDP + phosphate + 2 H(+). It functions in the pathway purine metabolism; AMP biosynthesis via de novo pathway; AMP from IMP: step 1/2. Functionally, plays an important role in the de novo pathway of purine nucleotide biosynthesis. Catalyzes the first committed step in the biosynthesis of AMP from IMP. The protein is Adenylosuccinate synthetase of Sulfurimonas denitrificans (strain ATCC 33889 / DSM 1251) (Thiomicrospira denitrificans (strain ATCC 33889 / DSM 1251)).